Reading from the N-terminus, the 143-residue chain is Nucleoside diphosphate kinase (143 aa).

ATP is bound by residues Lys11, Phe59, Arg87, Thr93, Arg104, and Asn114. The active-site Pros-phosphohistidine intermediate is His117.

The protein belongs to the NDK family. In terms of assembly, homotetramer. Mg(2+) is required as a cofactor.

The protein localises to the cytoplasm. The enzyme catalyses a 2'-deoxyribonucleoside 5'-diphosphate + ATP = a 2'-deoxyribonucleoside 5'-triphosphate + ADP. It carries out the reaction a ribonucleoside 5'-diphosphate + ATP = a ribonucleoside 5'-triphosphate + ADP. Functionally, major role in the synthesis of nucleoside triphosphates other than ATP. The ATP gamma phosphate is transferred to the NDP beta phosphate via a ping-pong mechanism, using a phosphorylated active-site intermediate. This is Nucleoside diphosphate kinase from Clostridium perfringens (strain ATCC 13124 / DSM 756 / JCM 1290 / NCIMB 6125 / NCTC 8237 / Type A).